A 100-amino-acid polypeptide reads, in one-letter code: ATP synthase subunit c (100 aa).

A run of 2 helical transmembrane segments spans residues 27 to 47 (SVIA…IGMG) and 72 to 92 (FIAL…TLIV).

The protein belongs to the ATPase C chain family. F-type ATPases have 2 components, F(1) - the catalytic core - and F(0) - the membrane proton channel. F(1) has five subunits: alpha(3), beta(3), gamma(1), delta(1), epsilon(1). F(0) has three main subunits: a(1), b(2) and c(10-14). The alpha and beta chains form an alternating ring which encloses part of the gamma chain. F(1) is attached to F(0) by a central stalk formed by the gamma and epsilon chains, while a peripheral stalk is formed by the delta and b chains.

Its subcellular location is the cell inner membrane. F(1)F(0) ATP synthase produces ATP from ADP in the presence of a proton or sodium gradient. F-type ATPases consist of two structural domains, F(1) containing the extramembraneous catalytic core and F(0) containing the membrane proton channel, linked together by a central stalk and a peripheral stalk. During catalysis, ATP synthesis in the catalytic domain of F(1) is coupled via a rotary mechanism of the central stalk subunits to proton translocation. The sequence is that of ATP synthase subunit c from Campylobacter curvus (strain 525.92).